The primary structure comprises 382 residues: Lipid-A-disaccharide synthase (382 aa).

This sequence belongs to the LpxB family.

It catalyses the reaction a lipid X + a UDP-2-N,3-O-bis[(3R)-3-hydroxyacyl]-alpha-D-glucosamine = a lipid A disaccharide + UDP + H(+). Its pathway is bacterial outer membrane biogenesis; LPS lipid A biosynthesis. Functionally, condensation of UDP-2,3-diacylglucosamine and 2,3-diacylglucosamine-1-phosphate to form lipid A disaccharide, a precursor of lipid A, a phosphorylated glycolipid that anchors the lipopolysaccharide to the outer membrane of the cell. The chain is Lipid-A-disaccharide synthase from Koribacter versatilis (strain Ellin345).